The chain runs to 398 residues: Aldo-keto reductase ausK (398 aa).

Aspartate 76 is an NADP(+) binding site. The active-site Proton donor is the tyrosine 81. Histidine 156 contributes to the substrate binding site. NADP(+)-binding positions include 186-187 (CN), glutamine 212, 241-251 (DALGSGKFQSR), and 317-325 (RKIQHLHDN).

Belongs to the aldo/keto reductase family. Aldo/keto reductase 2 subfamily. Homodimer.

It participates in secondary metabolite biosynthesis; terpenoid biosynthesis. In terms of biological role, aldo-keto reductase; part of the gene cluster B that mediates the biosynthesis of austinol and dehydroaustinol, two fungal meroterpenoids. The first step of the pathway is the synthesis of 3,5-dimethylorsellinic acid by the polyketide synthase ausA. 3,5-dimethylorsellinic acid is then prenylated by the polyprenyl transferase ausN. Further epoxidation by the FAD-dependent monooxygenase ausM and cyclization by the probable terpene cyclase ausL lead to the formation of protoaustinoid A. Protoaustinoid A is then oxidized to spiro-lactone preaustinoid A3 by the combined action of the FAD-binding monooxygenases ausB and ausC, and the dioxygenase ausE. Acid-catalyzed keto-rearrangement and ring contraction of the tetraketide portion of preaustinoid A3 by ausJ lead to the formation of preaustinoid A4. The aldo-keto reductase ausK, with the help of ausH, is involved in the next step by transforming preaustinoid A4 into isoaustinone which is in turn hydroxylated by the P450 monooxygenase ausI to form austinolide. Finally, the cytochrome P450 monooxygenase ausG modifies austinolide to austinol. Austinol can be further modified to dehydroaustinol which forms a diffusible complex with diorcinol that initiates conidiation. Due to genetic rearrangements of the clusters and the subsequent loss of some enzymes, the end products of the Emericella nidulans austinoid biosynthesis clusters are austinol and dehydroaustinol, even if additional enzymes, such as the O-acetyltransferase ausQ and the cytochrome P450 monooxygenase ausR are still functional. This chain is Aldo-keto reductase ausK, found in Emericella nidulans (strain FGSC A4 / ATCC 38163 / CBS 112.46 / NRRL 194 / M139) (Aspergillus nidulans).